A 514-amino-acid polypeptide reads, in one-letter code: Uridylate cyclase (514 aa).

Guanylate cyclase domains are found at residues Val-49–Ala-190 and Val-286–Gln-428. A ribonucleoside 5'-triphosphate contacts are provided by residues Tyr-52, Arg-105, Phe-178, Asn-184 to Lys-188, and Asp-291 to Thr-296. The Ca(2+) site is built by Asp-291, Ile-292, and Asp-339. Asp-291 serves as a coordination point for Mn(2+). The tract at residues Ile-495–Arg-514 is disordered. Positions Arg-496–Arg-514 are enriched in basic and acidic residues.

This sequence belongs to the adenylyl cyclase class-4/guanylyl cyclase family. Pyrimidine cyclase subfamily. In terms of assembly, monomer. Requires a divalent metal cation as cofactor.

It localises to the cytoplasm. The catalysed reaction is UTP = 3',5'-cyclic UMP + diphosphate. Its function is as follows. Pycsar (pyrimidine cyclase system for antiphage resistance) provides immunity against bacteriophage. The pyrimidine cyclase (PycC) synthesizes cyclic nucleotides in response to infection; these serve as specific second messenger signals. The signals activate the adjacent effector, leading to bacterial cell death and abortive phage infection. A clade A Pycsar system. The pyrimidine cyclase gene of a two-gene Pycsar system, generates cyclic UMP (cUMP) from UTP, has little to no activity on ATP, CTP or GTP. Expression of this and adjacent effector PaPycTIR (AC P0DV41) probably confers resistance to bacteriophage. The genes are probably only expressed in response to bacteriophage infection. Does not have adenylyl or guanylyl cyclase activity. The sequence is that of Uridylate cyclase from Pseudomonas aeruginosa.